Reading from the N-terminus, the 68-residue chain is Large ribosomal subunit protein uL30 (68 aa).

This sequence belongs to the universal ribosomal protein uL30 family. As to quaternary structure, part of the 50S ribosomal subunit.

The chain is Large ribosomal subunit protein uL30 from Paenarthrobacter aurescens (strain TC1).